A 469-amino-acid chain; its full sequence is ATP-dependent protease ATPase subunit HslU (469 aa).

ATP-binding positions include Ile-24, Gly-66 to Glu-71, Asp-282, Glu-347, and Arg-419.

This sequence belongs to the ClpX chaperone family. HslU subfamily. A double ring-shaped homohexamer of HslV is capped on each side by a ring-shaped HslU homohexamer. The assembly of the HslU/HslV complex is dependent on binding of ATP.

Its subcellular location is the cytoplasm. ATPase subunit of a proteasome-like degradation complex; this subunit has chaperone activity. The binding of ATP and its subsequent hydrolysis by HslU are essential for unfolding of protein substrates subsequently hydrolyzed by HslV. HslU recognizes the N-terminal part of its protein substrates and unfolds these before they are guided to HslV for hydrolysis. This chain is ATP-dependent protease ATPase subunit HslU, found in Listeria welshimeri serovar 6b (strain ATCC 35897 / DSM 20650 / CCUG 15529 / CIP 8149 / NCTC 11857 / SLCC 5334 / V8).